A 727-amino-acid chain; its full sequence is Engulfment and cell motility protein 1 (727 aa).

Tyrosine 18 bears the Phosphotyrosine; by HCK mark. 2 positions are modified to N6-acetyllysine: lysine 100 and lysine 105. Tyrosine 216 is modified (phosphotyrosine; by HCK). One can recognise an ELMO domain in the interval 319 to 492 (AQRDIIFELR…VVKEQVMRAL (174 aa)). The residue at position 344 (serine 344) is a Phosphoserine. Phosphotyrosine; by HCK is present on residues tyrosine 395 and tyrosine 511. A PH domain is found at 555–676 (RLVEGTCFRK…DGLNALLGKD (122 aa)). An SH3-binding motif is present at residues 707–714 (PDAPPPIP). Tyrosine 720 is modified (phosphotyrosine; by HCK).

Interacts with ADGRB1. Interacts directly with the SH3-domain of DOCK1 via its SH3-binding site. Part of a complex with DOCK1 and RAC1. Part of a complex with DOCK1 and CRK isoform CRK-II. Interacts with PLEKHG6. Interacts with HCK (via SH3 domain). Interacts with ADGRB3. Interacts with DOCK5. In terms of processing, phosphorylated by HCK. In terms of tissue distribution, widely expressed, with a higher expression in the spleen and placenta.

It localises to the cytoplasm. Its subcellular location is the cell membrane. Its function is as follows. Involved in cytoskeletal rearrangements required for phagocytosis of apoptotic cells and cell motility. Acts in association with DOCK1 and CRK. Was initially proposed to be required in complex with DOCK1 to activate Rac Rho small GTPases. May enhance the guanine nucleotide exchange factor (GEF) activity of DOCK1. This Homo sapiens (Human) protein is Engulfment and cell motility protein 1 (ELMO1).